Reading from the N-terminus, the 329-residue chain is Porphobilinogen deaminase (329 aa).

S-(dipyrrolylmethanemethyl)cysteine is present on cysteine 250.

The protein belongs to the HMBS family. As to quaternary structure, monomer. It depends on dipyrromethane as a cofactor.

It carries out the reaction 4 porphobilinogen + H2O = hydroxymethylbilane + 4 NH4(+). It functions in the pathway porphyrin-containing compound metabolism; protoporphyrin-IX biosynthesis; coproporphyrinogen-III from 5-aminolevulinate: step 2/4. Functionally, tetrapolymerization of the monopyrrole PBG into the hydroxymethylbilane pre-uroporphyrinogen in several discrete steps. The sequence is that of Porphobilinogen deaminase from Burkholderia thailandensis (strain ATCC 700388 / DSM 13276 / CCUG 48851 / CIP 106301 / E264).